Here is a 279-residue protein sequence, read N- to C-terminus: Proteasome subunit beta (279 aa).

A propeptide spans 1–51 (removed in mature form; by autocatalysis); it reads MTFDASGRLPEAFLTPGGSSFMDFLAGHAPDLLPGRRSLGTGDLSKDVPHG. Thr-52 acts as the Nucleophile in catalysis.

It belongs to the peptidase T1B family. As to quaternary structure, the 20S proteasome core is composed of 14 alpha and 14 beta subunits that assemble into four stacked heptameric rings, resulting in a barrel-shaped structure. The two inner rings, each composed of seven catalytic beta subunits, are sandwiched by two outer rings, each composed of seven alpha subunits. The catalytic chamber with the active sites is on the inside of the barrel. Has a gated structure, the ends of the cylinder being occluded by the N-termini of the alpha-subunits. Is capped by the proteasome-associated ATPase, ARC.

The protein localises to the cytoplasm. The enzyme catalyses Cleavage of peptide bonds with very broad specificity.. The protein operates within protein degradation; proteasomal Pup-dependent pathway. Its activity is regulated as follows. The formation of the proteasomal ATPase ARC-20S proteasome complex, likely via the docking of the C-termini of ARC into the intersubunit pockets in the alpha-rings, may trigger opening of the gate for substrate entry. Interconversion between the open-gate and close-gate conformations leads to a dynamic regulation of the 20S proteasome proteolysis activity. In terms of biological role, component of the proteasome core, a large protease complex with broad specificity involved in protein degradation. This chain is Proteasome subunit beta, found in Kribbella flavida (strain DSM 17836 / JCM 10339 / NBRC 14399).